Consider the following 360-residue polypeptide: MIIFATEVQTINSFVRLESFKEVYGLIWGFLPIFSLVVGIVTGVLVLVWLEREISARIQQRIGPEYAGALGILQALADGIKLLFKENLRPSRGNTTLFSIGPSLAVISILLSYSVIPFSNHLVLADFNIGIFLWIAISSIAPIGLLMSGYGSNNKYSFLGGLRAAAQSISYEIPLTLCLLSISLLSNSLSTVDIVEAQSKYGFWGWNLWRQPIGFIIFLISSLAECERLPFDLPEAEEELVAGYQTEYSGIKFGLFYVASYLNLLISSLFVTVLYLGGWNISLPYISSLELFERDPIFGTTIGIFITLAKTYLFLFISITTRWTLLRLRMDQLLNFGWKFLLPISLGNLLLTTSFQVFSL.

8 consecutive transmembrane segments (helical) span residues phenylalanine 30–leucine 50, phenylalanine 98–phenylalanine 118, phenylalanine 127–methionine 147, alanine 165–leucine 185, phenylalanine 203–leucine 223, phenylalanine 253–valine 273, isoleucine 297–isoleucine 317, and phenylalanine 340–leucine 360.

This sequence belongs to the complex I subunit 1 family. As to quaternary structure, NDH is composed of at least 16 different subunits, 5 of which are encoded in the nucleus.

The protein localises to the plastid. It localises to the chloroplast thylakoid membrane. It catalyses the reaction a plastoquinone + NADH + (n+1) H(+)(in) = a plastoquinol + NAD(+) + n H(+)(out). The enzyme catalyses a plastoquinone + NADPH + (n+1) H(+)(in) = a plastoquinol + NADP(+) + n H(+)(out). NDH shuttles electrons from NAD(P)H:plastoquinone, via FMN and iron-sulfur (Fe-S) centers, to quinones in the photosynthetic chain and possibly in a chloroplast respiratory chain. The immediate electron acceptor for the enzyme in this species is believed to be plastoquinone. Couples the redox reaction to proton translocation, and thus conserves the redox energy in a proton gradient. The sequence is that of NAD(P)H-quinone oxidoreductase subunit 1, chloroplastic from Aethionema cordifolium (Lebanon stonecress).